A 334-amino-acid polypeptide reads, in one-letter code: Procathepsin L (334 aa).

The first 17 residues, 1–17 (MTPLLLLAVLCLGTALA), serve as a signal peptide directing secretion. A propeptide spans 18–113 (TPKFDQTFNA…RLFQEPLMLQ (96 aa)) (activation peptide). Position 122 (Glu122) interacts with Zn(2+). Cystine bridges form between Cys135-Cys178 and Cys169-Cys211. The active site involves Cys138. 9 residues coordinate Zn(2+): Glu163, Asp184, Glu199, Glu205, Asp227, Asp250, His253, Asp273, and Asp275. Residues Cys269 and Cys322 are joined by a disulfide bond. His276 is an active-site residue. Positions 289–290 (DS) are excised as a propeptide. Residue Asn300 is part of the active site.

It belongs to the peptidase C1 family. As to quaternary structure, dimer of a heavy and a light chain linked by disulfide bonds. Interacts with Long isoform of CD74/Ii chain; the interaction stabilizes the conformation of mature CTSL. During export along the endocytic pathway, pro-CTSL undergoes several proteolytic cleavages to generate the CTSL single-chain and two-chain mature forms, composed of a heavy chain linked to a light chain by disulfide bonds. Autocleavage; produces the single-chain CTSL after cleavage of the propeptide. The cleavage can be intermolecular. As to expression, both mature cathepsin L1 and procathepsin L are found in the upper epidermis. The lower epidermis predominantly contains procathepsin L. In seminiferous tubules expression is greater at stages VI-VII than at stages IX-XII.

The protein resides in the lysosome. It localises to the apical cell membrane. Its subcellular location is the cytoplasmic vesicle. The protein localises to the secretory vesicle. It is found in the chromaffin granule. The protein resides in the secreted. It localises to the extracellular space. It catalyses the reaction Specificity close to that of papain. As compared to cathepsin B, cathepsin L exhibits higher activity toward protein substrates, but has little activity on Z-Arg-Arg-NHMec, and no peptidyl-dipeptidase activity.. With respect to regulation, inhibited by the propeptide produced by autocleavage. Long isoform of CD74/Ii chain stabilizes the conformation of mature CTSL by binding to its active site and serving as a chaperone to help maintain a pool of mature enzyme in endocytic compartments and extracellular space of APCs. IFNG enhances the conversion into the CTSL mature and active form. Inhibited by CST6. Inhibited by the glycopeptide antibiotic teicoplanin. Inhibited by amantadine. Its function is as follows. Thiol protease important for the overall degradation of proteins in lysosomes. Plays a critical for normal cellular functions such as general protein turnover, antigen processing and bone remodeling. Involved in the solubilization of cross-linked TG/thyroglobulin and in the subsequent release of thyroid hormone thyroxine (T4) by limited proteolysis of TG/thyroglobulin in the thyroid follicle lumen. In neuroendocrine chromaffin cells secretory vesicles, catalyzes the prohormone proenkephalin processing to the active enkephalin peptide neurotransmitter. In thymus, regulates CD4(+) T cell positive selection by generating the major histocompatibility complex class II (MHCII) bound peptide ligands presented by cortical thymic epithelial cells. Also mediates invariant chain processing in cortical thymic epithelial cells. Major elastin-degrading enzyme at neutral pH. Accumulates as a mature and active enzyme in the extracellular space of antigen presenting cells (APCs) to regulate degradation of the extracellular matrix in the course of inflammation. Secreted form generates endostatin from COL18A1. Critical for cardiac morphology and function. Plays an important role in hair follicle morphogenesis and cycling, as well as epidermal differentiation. Required for maximal stimulation of steroidogenesis by TIMP1. This Rattus norvegicus (Rat) protein is Procathepsin L.